The sequence spans 78 residues: MNYKIGIMSLLVITSIIFLFLVPDKVEAQKECIGPCDMFTDCQAACVGIRKGYNYGQCVAWKPKDDDPFTCCCYKLTP.

Residues 1 to 28 form the signal peptide; that stretch reads MNYKIGIMSLLVITSIIFLFLVPDKVEA. 4 disulfide bridges follow: C32–C73, C36–C58, C42–C71, and C46–C72.

It belongs to the DEFL family.

It localises to the secreted. This Arabidopsis thaliana (Mouse-ear cress) protein is Defensin-like protein 74 (LCR43).